The following is a 376-amino-acid chain: Protein-glutamate methylesterase/protein-glutamine glutaminase (376 aa).

The region spanning 5-122 (KVLIVDDSAL…QHTFEDYTDE (118 aa)) is the Response regulatory domain. D56 is modified (4-aspartylphosphate). Residues 185–376 (SKPSHKVIAL…PEKILALIKK (192 aa)) form the CheB-type methylesterase domain. Active-site residues include S197, H223, and D319.

It belongs to the CheB family. Phosphorylated by CheA. Phosphorylation of the N-terminal regulatory domain activates the methylesterase activity.

It is found in the cytoplasm. The enzyme catalyses [protein]-L-glutamate 5-O-methyl ester + H2O = L-glutamyl-[protein] + methanol + H(+). It catalyses the reaction L-glutaminyl-[protein] + H2O = L-glutamyl-[protein] + NH4(+). Functionally, involved in chemotaxis. Part of a chemotaxis signal transduction system that modulates chemotaxis in response to various stimuli. Catalyzes the demethylation of specific methylglutamate residues introduced into the chemoreceptors (methyl-accepting chemotaxis proteins or MCP) by CheR. Also mediates the irreversible deamidation of specific glutamine residues to glutamic acid. The sequence is that of Protein-glutamate methylesterase/protein-glutamine glutaminase from Hydrogenovibrio crunogenus (strain DSM 25203 / XCL-2) (Thiomicrospira crunogena).